The sequence spans 61 residues: Small ribosomal subunit protein uS14B (61 aa).

The Zn(2+) site is built by cysteine 24, cysteine 27, cysteine 40, and cysteine 43.

It belongs to the universal ribosomal protein uS14 family. Zinc-binding uS14 subfamily. As to quaternary structure, part of the 30S ribosomal subunit. Contacts proteins S3 and S10. The cofactor is Zn(2+).

Functionally, binds 16S rRNA, required for the assembly of 30S particles and may also be responsible for determining the conformation of the 16S rRNA at the A site. This Lactiplantibacillus plantarum (strain ATCC BAA-793 / NCIMB 8826 / WCFS1) (Lactobacillus plantarum) protein is Small ribosomal subunit protein uS14B.